The sequence spans 518 residues: Mitochondrial distribution and morphology protein 34 (518 aa).

One can recognise an SMP-LTD domain in the interval M1–L198. Disordered regions lie at residues S335–S369 and I491–V518. Positions R336–S350 are enriched in basic residues. A compositionally biased stretch (basic and acidic residues) spans P492–T506.

The protein belongs to the MDM34 family. As to quaternary structure, component of the ER-mitochondria encounter structure (ERMES) or MDM complex, composed of MMM1, MDM10, MDM12 and MDM34.

The protein localises to the mitochondrion outer membrane. In terms of biological role, component of the ERMES/MDM complex, which serves as a molecular tether to connect the endoplasmic reticulum (ER) and mitochondria. Components of this complex are involved in the control of mitochondrial shape and protein biogenesis, and function in nonvesicular lipid trafficking between the ER and mitochondria. MDM34 is required for the interaction of the ER-resident membrane protein MMM1 and the outer mitochondrial membrane-resident beta-barrel protein MDM10. The sequence is that of Mitochondrial distribution and morphology protein 34 from Meyerozyma guilliermondii (strain ATCC 6260 / CBS 566 / DSM 6381 / JCM 1539 / NBRC 10279 / NRRL Y-324) (Yeast).